Reading from the N-terminus, the 270-residue chain is Formamidopyrimidine-DNA glycosylase (270 aa).

Proline 2 functions as the Schiff-base intermediate with DNA in the catalytic mechanism. Glutamate 3 (proton donor) is an active-site residue. Lysine 58 acts as the Proton donor; for beta-elimination activity in catalysis. Positions 91, 110, and 151 each coordinate DNA. The segment at phenylalanine 236–arginine 270 adopts an FPG-type zinc-finger fold. The Proton donor; for delta-elimination activity role is filled by arginine 260.

This sequence belongs to the FPG family. As to quaternary structure, monomer. Zn(2+) serves as cofactor.

It carries out the reaction Hydrolysis of DNA containing ring-opened 7-methylguanine residues, releasing 2,6-diamino-4-hydroxy-5-(N-methyl)formamidopyrimidine.. It catalyses the reaction 2'-deoxyribonucleotide-(2'-deoxyribose 5'-phosphate)-2'-deoxyribonucleotide-DNA = a 3'-end 2'-deoxyribonucleotide-(2,3-dehydro-2,3-deoxyribose 5'-phosphate)-DNA + a 5'-end 5'-phospho-2'-deoxyribonucleoside-DNA + H(+). Functionally, involved in base excision repair of DNA damaged by oxidation or by mutagenic agents. Acts as a DNA glycosylase that recognizes and removes damaged bases. Has a preference for oxidized purines, such as 7,8-dihydro-8-oxoguanine (8-oxoG). Has AP (apurinic/apyrimidinic) lyase activity and introduces nicks in the DNA strand. Cleaves the DNA backbone by beta-delta elimination to generate a single-strand break at the site of the removed base with both 3'- and 5'-phosphates. The chain is Formamidopyrimidine-DNA glycosylase from Pseudomonas putida (strain W619).